We begin with the raw amino-acid sequence, 198 residues long: MDDERVSQDPTAENETDAEDRNDDDPSGSAPPQPVTHQRRLLLFVIAGVVLATDLLTKILAVANIEPGRPVWLIGDIVSLRLVRNPGAAFSMATGMTWLLTLVAVGVVIGVVRIGRTLRSPWWALGLGLVLGGALGNLVDRFFRAPGVMQGHVVDFVSVGWWPVFNVADSGIVCGAILLVVLTLIGLEPDGTRKGVEK.

The segment at 1-34 (MDDERVSQDPTAENETDAEDRNDDDPSGSAPPQP) is disordered. A compositionally biased stretch (acidic residues) spans 12–26 (AENETDAEDRNDDDP). Transmembrane regions (helical) follow at residues 42–62 (LLFV…ILAV), 92–112 (MATG…IGVV), and 120–140 (SPWW…NLVD). Catalysis depends on residues D155 and D169. Residues 167-187 (VADSGIVCGAILLVVLTLIGL) traverse the membrane as a helical segment.

Belongs to the peptidase A8 family.

The protein resides in the cell membrane. It carries out the reaction Release of signal peptides from bacterial membrane prolipoproteins. Hydrolyzes -Xaa-Yaa-Zaa-|-(S,diacylglyceryl)Cys-, in which Xaa is hydrophobic (preferably Leu), and Yaa (Ala or Ser) and Zaa (Gly or Ala) have small, neutral side chains.. Its pathway is protein modification; lipoprotein biosynthesis (signal peptide cleavage). Functionally, this protein specifically catalyzes the removal of signal peptides from prolipoproteins. This is Lipoprotein signal peptidase from Rhodococcus jostii (strain RHA1).